The following is an 879-amino-acid chain: Probable phospholipid transport protein YdbH (879 aa).

Residues 1-6 (MLGKYK) are Cytoplasmic-facing. Residues 7 to 29 (AVLALLLLIILVPLTLLMTLGLW) form a helical membrane-spanning segment. Residues 30–879 (VPTLAGIWLP…PQGKECEEKQ (850 aa)) lie on the Periplasmic side of the membrane.

As to quaternary structure, interacts with the outer membrane lipoprotein YnbE.

Its subcellular location is the cell inner membrane. Functionally, involved in outer membrane lipid homeostasis. Interacts with the outer membrane lipoprotein YnbE to form a functional protein bridge connecting the inner and outer membranes of the cell. Likely transports phospholipids between the inner membrane and the outer membrane. It would provide a bridge-like structure that protects phospholipids as they travel across the periplasm. In terms of biological role, tamB, YdbH and YhdP are redundant, but not equivalent, in performing an essential function for growth and maintaining lipid homeostasis in the outer membrane. Any of these three proteins is sufficient for growth. The chain is Probable phospholipid transport protein YdbH (ydbH) from Escherichia coli (strain K12).